Here is a 110-residue protein sequence, read N- to C-terminus: Large ribosomal subunit protein uL22 (110 aa).

Belongs to the universal ribosomal protein uL22 family. In terms of assembly, part of the 50S ribosomal subunit.

Functionally, this protein binds specifically to 23S rRNA; its binding is stimulated by other ribosomal proteins, e.g. L4, L17, and L20. It is important during the early stages of 50S assembly. It makes multiple contacts with different domains of the 23S rRNA in the assembled 50S subunit and ribosome. Its function is as follows. The globular domain of the protein is located near the polypeptide exit tunnel on the outside of the subunit, while an extended beta-hairpin is found that lines the wall of the exit tunnel in the center of the 70S ribosome. This is Large ribosomal subunit protein uL22 from Nitrosomonas eutropha (strain DSM 101675 / C91 / Nm57).